A 267-amino-acid chain; its full sequence is Ubiquinone biosynthesis protein COQ4, mitochondrial (267 aa).

A mitochondrion-targeting transit peptide spans 1 to 17; that stretch reads MSRLKIPSQLLRGGRGF. Residues His-153, Asp-154, His-157, and Glu-169 each coordinate Zn(2+).

Belongs to the COQ4 family. In terms of assembly, component of a multi-subunit COQ enzyme complex, composed of at least COQ3, COQ4, COQ5, COQ6, COQ7 and COQ9. Zn(2+) is required as a cofactor.

The protein localises to the mitochondrion inner membrane. The enzyme catalyses a 4-hydroxy-3-methoxy-5-(all-trans-polyprenyl)benzoate + H(+) = a 2-methoxy-6-(all-trans-polyprenyl)phenol + CO2. The protein operates within cofactor biosynthesis; ubiquinone biosynthesis. Functionally, lyase that catalyzes the C1-decarboxylation of 4-hydroxy-3-methoxy-5-(all-trans-polyprenyl)benzoic acid into 2-methoxy-6-(all-trans-polyprenyl)phenol during ubiquinone biosynthesis. This Arthroderma otae (strain ATCC MYA-4605 / CBS 113480) (Microsporum canis) protein is Ubiquinone biosynthesis protein COQ4, mitochondrial.